We begin with the raw amino-acid sequence, 129 residues long: Small ribosomal subunit protein uS9 (129 aa).

Belongs to the universal ribosomal protein uS9 family.

The protein is Small ribosomal subunit protein uS9 of Chlorobium phaeovibrioides (strain DSM 265 / 1930) (Prosthecochloris vibrioformis (strain DSM 265)).